Here is a 78-residue protein sequence, read N- to C-terminus: Large ribosomal subunit protein bL28 (78 aa).

The segment at 1–23 (MSRVCQVTGKKPMVGNNRSHAKN) is disordered.

This sequence belongs to the bacterial ribosomal protein bL28 family.

In Shewanella frigidimarina (strain NCIMB 400), this protein is Large ribosomal subunit protein bL28.